The following is a 359-amino-acid chain: 3-dehydroquinate synthase (359 aa).

Residues 70–75, 105–109, 129–130, lysine 142, lysine 151, and 169–172 each bind NAD(+); these read DGEQYK, GVIGD, TT, and FYKT. Zn(2+) contacts are provided by glutamate 184, histidine 247, and histidine 264.

Belongs to the sugar phosphate cyclases superfamily. Dehydroquinate synthase family. Co(2+) is required as a cofactor. Zn(2+) serves as cofactor. It depends on NAD(+) as a cofactor.

The protein localises to the cytoplasm. The enzyme catalyses 7-phospho-2-dehydro-3-deoxy-D-arabino-heptonate = 3-dehydroquinate + phosphate. The protein operates within metabolic intermediate biosynthesis; chorismate biosynthesis; chorismate from D-erythrose 4-phosphate and phosphoenolpyruvate: step 2/7. Its function is as follows. Catalyzes the conversion of 3-deoxy-D-arabino-heptulosonate 7-phosphate (DAHP) to dehydroquinate (DHQ). The chain is 3-dehydroquinate synthase from Francisella tularensis subsp. holarctica (strain FTNF002-00 / FTA).